Here is a 241-residue protein sequence, read N- to C-terminus: Small ribosomal subunit protein uS3c (241 aa).

It belongs to the universal ribosomal protein uS3 family. In terms of assembly, part of the 30S ribosomal subunit.

It localises to the plastid. The polypeptide is Small ribosomal subunit protein uS3c (rps3) (Helicosporidium sp. subsp. Simulium jonesii (Green alga)).